An 899-amino-acid chain; its full sequence is Protein translocase subunit SecA (899 aa).

ATP is bound by residues Gln-87, 105 to 109 (GEGKT), and Asp-512. Disordered stretches follow at residues 573 to 592 (RRID…PGSS) and 861 to 899 (ITVN…CCGK). The Zn(2+) site is built by Cys-885, Cys-887, Cys-896, and Cys-897.

The protein belongs to the SecA family. In terms of assembly, monomer and homodimer. Part of the essential Sec protein translocation apparatus which comprises SecA, SecYEG and auxiliary proteins SecDF-YajC and YidC. Requires Zn(2+) as cofactor.

It localises to the cell inner membrane. It is found in the cytoplasm. It catalyses the reaction ATP + H2O + cellular proteinSide 1 = ADP + phosphate + cellular proteinSide 2.. In terms of biological role, part of the Sec protein translocase complex. Interacts with the SecYEG preprotein conducting channel. Has a central role in coupling the hydrolysis of ATP to the transfer of proteins into and across the cell membrane, serving as an ATP-driven molecular motor driving the stepwise translocation of polypeptide chains across the membrane. This is Protein translocase subunit SecA from Trichlorobacter lovleyi (strain ATCC BAA-1151 / DSM 17278 / SZ) (Geobacter lovleyi).